We begin with the raw amino-acid sequence, 577 residues long: BAG family molecular chaperone regulator 3 (577 aa).

Polar residues predominate over residues M1 to G17. 3 disordered regions span residues M1 to I81, T126 to L207, and P229 to V427. Position 2 is an N-acetylserine (S2). 2 consecutive WW domains span residues D22–V56 and T126–M157. S138 carries the post-translational modification Phosphoserine. R141 carries the post-translational modification Omega-N-methylarginine. A compositionally biased stretch (low complexity) spans P158–S204. S179 and S204 each carry phosphoserine. Residues I256–P265 show a composition bias toward basic and acidic residues. R267 is modified (omega-N-methylarginine). Residues S280, S281, and S285 each carry the phosphoserine modification. At T291 the chain carries Phosphothreonine. S297 is subject to Phosphoserine. Pro residues-rich tracts occupy residues P332–H341 and I376–P392. S380, S382, and S390 each carry phosphoserine. The 78-residue stretch at G426–A503 folds into the BAG domain. A Glycyl lysine isopeptide (Lys-Gly) (interchain with G-Cter in SUMO1); alternate cross-link involves residue K450. K450 is covalently cross-linked (Glycyl lysine isopeptide (Lys-Gly) (interchain with G-Cter in SUMO2); alternate). The tract at residues Q524–P577 is disordered. Positions A535 to Q548 are enriched in basic and acidic residues.

Forms a ternary complex with HSPA1A/HSP70 and HSPB8, serving as scaffold subunit. Component of the chaperone-assisted selective autophagy (CASA) complex consisting of BAG3, HSPA8/HSC70, HSPB8 and STUB1/CHIP. Binds to the ATPase domain of HSP70 chaperones. Interacts with BCL2. Interacts with phospholipase C-gamma proteins. Interacts with DNAJB1 and DNAJB6. Interacts (via BAG domain) with HSF1; this interaction occurs in normal and heat-shocked cells. Interacts with HSPA8/HSC70 (via NBD), HSPA1A (via NBD) and HSPA1B (via NBD). Interacts (via WW domain 1) with SYNPO2 (via PPPY motif). Interacts with HSPB8.

It localises to the nucleus. It is found in the cytoplasm. Co-chaperone and adapter protein that connects different classes of molecular chaperones including heat shock proteins 70 (HSP70s), e.g. HSPA1A/HSP70 or HSPA8/HSC70, and small heat shock proteins (sHSPs), e.g. HSPB8. Acts as a nucleotide-exchange factor (NEF) promoting the release of ADP from HSP70s, thereby triggering client protein release. Nucleotide release is mediated via BAG3 binding to the nucleotide-binding domain (NBD) of HSP70s, whereas client release is mediated via its binding to the substrate-binding domain (SBD). Has anti-apoptotic activity. Plays a role in the HSF1 nucleocytoplasmic transport. The protein is BAG family molecular chaperone regulator 3 (Bag3) of Mus musculus (Mouse).